The following is a 98-amino-acid chain: NADH-ubiquinone oxidoreductase chain 4L (98 aa).

Helical transmembrane passes span 1–21 (MSMM…GLLM), 29–49 (SLLC…VTIL), and 61–81 (IILL…LVMV).

It belongs to the complex I subunit 4L family. In terms of assembly, core subunit of respiratory chain NADH dehydrogenase (Complex I) which is composed of 45 different subunits.

The protein localises to the mitochondrion inner membrane. The enzyme catalyses a ubiquinone + NADH + 5 H(+)(in) = a ubiquinol + NAD(+) + 4 H(+)(out). In terms of biological role, core subunit of the mitochondrial membrane respiratory chain NADH dehydrogenase (Complex I) which catalyzes electron transfer from NADH through the respiratory chain, using ubiquinone as an electron acceptor. Part of the enzyme membrane arm which is embedded in the lipid bilayer and involved in proton translocation. This chain is NADH-ubiquinone oxidoreductase chain 4L (MT-ND4L), found in Zalophus californianus (California sealion).